The primary structure comprises 442 residues: Histidinol dehydrogenase (442 aa).

Residues 1 to 20 (MLNVTDLRGQTPSKSDIRRA) are disordered. NAD(+) contacts are provided by Tyr-129, Gln-193, and Asn-218. 3 residues coordinate substrate: Thr-241, Gln-263, and His-266. Residues Gln-263 and His-266 each coordinate Zn(2+). Catalysis depends on proton acceptor residues Glu-332 and His-333. Substrate contacts are provided by His-333, Asp-366, Glu-420, and His-425. Asp-366 contacts Zn(2+). His-425 contributes to the Zn(2+) binding site.

The protein belongs to the histidinol dehydrogenase family. Zn(2+) is required as a cofactor.

It catalyses the reaction L-histidinol + 2 NAD(+) + H2O = L-histidine + 2 NADH + 3 H(+). Its pathway is amino-acid biosynthesis; L-histidine biosynthesis; L-histidine from 5-phospho-alpha-D-ribose 1-diphosphate: step 9/9. Its function is as follows. Catalyzes the sequential NAD-dependent oxidations of L-histidinol to L-histidinaldehyde and then to L-histidine. The polypeptide is Histidinol dehydrogenase (Corynebacterium glutamicum (strain ATCC 13032 / DSM 20300 / JCM 1318 / BCRC 11384 / CCUG 27702 / LMG 3730 / NBRC 12168 / NCIMB 10025 / NRRL B-2784 / 534)).